We begin with the raw amino-acid sequence, 198 residues long: Recombination protein RecR (198 aa).

A C4-type zinc finger spans residues 57–72 (CTICGHITDTDPCYIC). The 96-residue stretch at 80–175 (TTICVVQDPK…KVTRIAHGLP (96 aa)) folds into the Toprim domain.

It belongs to the RecR family.

Its function is as follows. May play a role in DNA repair. It seems to be involved in an RecBC-independent recombinational process of DNA repair. It may act with RecF and RecO. This is Recombination protein RecR from Geobacillus kaustophilus (strain HTA426).